A 185-amino-acid polypeptide reads, in one-letter code: Ribosome-recycling factor (185 aa).

It belongs to the RRF family.

The protein resides in the cytoplasm. Its function is as follows. Responsible for the release of ribosomes from messenger RNA at the termination of protein biosynthesis. May increase the efficiency of translation by recycling ribosomes from one round of translation to another. In Shewanella loihica (strain ATCC BAA-1088 / PV-4), this protein is Ribosome-recycling factor.